Here is a 364-residue protein sequence, read N- to C-terminus: MSDGKDSLDLSGLGAAVPNAKELSAEDKANLVESIKNTLQGLAARHTDVLESLEPKVRKRVEVLREIQSQHDDLEAKFFEERAALEAKYQKMYEPLYSKRYEIVNGVVEVDGVTKEAADETPAEQKEEKGVPEFWLNAMKNHEILSEEIQERDEEALKYLKDIKWYRISEPKGFKLEFYFDTNPFFKNSVLTKTYHMIDEDEPILEKAIGTEIEWFPGKCLTQKVLKKKPKKGSKNTKPITKTENCESFFNFFSPPQVPDDDEEIDEDTAEQLQNQMEQDYDIGSTIRDKIIPHAVSWFTGEAAQDEDFEGIMDDEDDDDEDDDDDEDEDDEGDDEDDEDEKKGGRVPAGEGQQGERPAECKQQ.

The stretch at 32-86 (VESIKNTLQGLAARHTDVLESLEPKVRKRVEVLREIQSQHDDLEAKFFEERAALE) forms a coiled coil. A Nuclear export signal motif is present at residues 53–68 (LEPKVRKRVEVLREIQ). A Nuclear localization signal motif is present at residues 227–232 (KKKPKK). Disordered stretches follow at residues 250–269 (FNFFSPPQVPDDDEEIDEDT) and 301–364 (GEAA…CKQQ). Acidic residues-rich tracts occupy residues 259–269 (PDDDEEIDEDT) and 304–340 (AQDEDFEGIMDDEDDDDEDDDDDEDEDDEGDDEDDED). Cys-361 is modified (cysteine methyl ester). The S-farnesyl cysteine moiety is linked to residue Cys-361. Residues 362 to 364 (KQQ) constitute a propeptide, removed in mature form.

Belongs to the nucleosome assembly protein (NAP) family.

Its subcellular location is the nucleus. It is found in the cytoplasm. Functionally, may modulate chromatin structure by regulation of nucleosome assembly/disassembly. The polypeptide is Nucleosome assembly protein 1;2 (NAP1;2) (Oryza sativa subsp. japonica (Rice)).